A 324-amino-acid chain; its full sequence is D-alanine--D-alanine ligase (324 aa).

The ATP-grasp domain maps to 116–311 (KQVWHTLGIP…FQQLVLAILA (196 aa)). 142–197 (ATELGFPLIVKPAHEGSSIGMAKVSSASELIDAWKAASTYDSQVLVEQWIHGPEFT) contributes to the ATP binding site. Residues D265, E278, and N280 each coordinate Mg(2+).

Belongs to the D-alanine--D-alanine ligase family. It depends on Mg(2+) as a cofactor. Requires Mn(2+) as cofactor.

The protein localises to the cytoplasm. The enzyme catalyses 2 D-alanine + ATP = D-alanyl-D-alanine + ADP + phosphate + H(+). It participates in cell wall biogenesis; peptidoglycan biosynthesis. Functionally, cell wall formation. The chain is D-alanine--D-alanine ligase from Pseudomonas fluorescens (strain Pf0-1).